The sequence spans 228 residues: Large ribosomal subunit protein uL3 (228 aa).

Glutamine 151 bears the N5-methylglutamine mark.

Belongs to the universal ribosomal protein uL3 family. Part of the 50S ribosomal subunit. Forms a cluster with proteins L14 and L19. Post-translationally, methylated by PrmB.

Its function is as follows. One of the primary rRNA binding proteins, it binds directly near the 3'-end of the 23S rRNA, where it nucleates assembly of the 50S subunit. In Rhizobium meliloti (strain 1021) (Ensifer meliloti), this protein is Large ribosomal subunit protein uL3.